A 341-amino-acid chain; its full sequence is 3-dehydroquinate synthase (341 aa).

NAD(+) contacts are provided by residues aspartate 54 to lysine 59, glycine 88 to aspartate 92, threonine 112 to threonine 113, lysine 125, lysine 133, and threonine 151 to threonine 154. Zn(2+)-binding residues include glutamate 166, histidine 220, and histidine 236.

The protein belongs to the sugar phosphate cyclases superfamily. Dehydroquinate synthase family. The cofactor is NAD(+). Co(2+) serves as cofactor. It depends on Zn(2+) as a cofactor.

It localises to the cytoplasm. It carries out the reaction 7-phospho-2-dehydro-3-deoxy-D-arabino-heptonate = 3-dehydroquinate + phosphate. It participates in metabolic intermediate biosynthesis; chorismate biosynthesis; chorismate from D-erythrose 4-phosphate and phosphoenolpyruvate: step 2/7. Its function is as follows. Catalyzes the conversion of 3-deoxy-D-arabino-heptulosonate 7-phosphate (DAHP) to dehydroquinate (DHQ). The chain is 3-dehydroquinate synthase from Thermococcus kodakarensis (strain ATCC BAA-918 / JCM 12380 / KOD1) (Pyrococcus kodakaraensis (strain KOD1)).